The sequence spans 319 residues: Non-homologous end joining protein Ku (319 aa).

Residues 10–188 form the Ku domain; it reads ISFGLVTVPI…PQGIELSEDE (179 aa). Residues 252–319 are disordered; sequence QSVAKAKASR…TTPKKPRRSA (68 aa). Positions 260-274 are enriched in basic and acidic residues; it reads SRGESGEADVHELPR. Basic residues predominate over residues 305–319; it reads TAAKKTTPKKPRRSA.

This sequence belongs to the prokaryotic Ku family. Homodimer. Interacts with LigD.

Functionally, with LigD forms a non-homologous end joining (NHEJ) DNA repair enzyme, which repairs dsDNA breaks with reduced fidelity. Binds linear dsDNA with 5'- and 3'- overhangs but not closed circular dsDNA nor ssDNA. Recruits and stimulates the ligase activity of LigD. The chain is Non-homologous end joining protein Ku from Streptomyces avermitilis (strain ATCC 31267 / DSM 46492 / JCM 5070 / NBRC 14893 / NCIMB 12804 / NRRL 8165 / MA-4680).